The primary structure comprises 252 residues: U2 small nuclear ribonucleoprotein A' (252 aa).

LRR repeat units follow at residues 41–62 (PHDAIDFTDNDIQVLGNFPLSP), 63–84 (RIRTLLLARNRIAQIQSTLPNA), and 87–108 (NLKNLVLASNNIGELADLEVLG). Positions 121–159 (NPVTKKENYRYWVLWLCPQVRFLDYVKVKDAERQKAKEL) constitute an LRRCT domain.

Belongs to the U2 small nuclear ribonucleoprotein A family. In terms of assembly, associated with the spliceosome.

It localises to the nucleus. Functionally, involved in pre-mRNA splicing. The polypeptide is U2 small nuclear ribonucleoprotein A' (lea-1) (Neurospora crassa (strain ATCC 24698 / 74-OR23-1A / CBS 708.71 / DSM 1257 / FGSC 987)).